The following is a 292-amino-acid chain: Short chain dehydrogenases/reductase notP' (292 aa).

Positions 1 to 25 (MPQTSDGNVHAPQYREAKPSQGDPS) are disordered. 7 residues coordinate NADP(+): Leu-48, Asp-97, Lys-158, Tyr-193, Lys-197, Ile-230, and Thr-232. The active-site Proton donor is Tyr-193. Catalysis depends on Lys-197, which acts as the Lowers pKa of active site Tyr.

The protein belongs to the short-chain dehydrogenases/reductases (SDR) family.

In terms of biological role, short chain dehydrogenases/reductase; part of the gene cluster that mediates the biosynthesis of notoamide, a fungal indole alkaloid that belongs to a family of natural products containing a characteristic bicyclo[2.2.2]diazaoctane core. The first step of notoamide biosynthesis involves coupling of L-proline and L-tryptophan by the bimodular NRPS notE', to produce cyclo-L-tryptophan-L-proline called brevianamide F. The reverse prenyltransferase notF' then acts as a deoxybrevianamide E synthase and converts brevianamide F to deoxybrevianamide E via reverse prenylation at C-2 of the indole ring leading to the bicyclo[2.2.2]diazaoctane core. Deoxybrevianamide E is further hydroxylated at C-6 of the indole ring, likely catalyzed by the cytochrome P450 monooxygenase notG', to yield 6-hydroxy-deoxybrevianamide E. 6-hydroxy-deoxybrevianamide E is a specific substrate of the prenyltransferase notC' for normal prenylation at C-7 to produce 6-hydroxy-7-prenyl-deoxybrevianamide, also called notoamide S. As the proposed pivotal branching point in notoamide biosynthesis, notoamide S can be diverted to notoamide E through an oxidative pyran ring closure putatively catalyzed by either notH' cytochrome P450 monooxygenase or the notD' FAD-linked oxidoreductase. This step would be followed by an indole 2,3-epoxidation-initiated pinacol-like rearrangement catalyzed by the notB' FAD-dependent monooxygenase leading to the formation of notoamide C and notoamide D. On the other hand notoamide S is converted to notoamide T by notH' (or notD'), a bifunctional oxidase that also functions as the intramolecular Diels-Alderase responsible for generation of (-)-notoamide T. To generate antipodal (+)-notoaminide T, notH (or notD) in Aspergillus strain MF297-2 is expected to catalyze a Diels-Alder reaction leading to the opposite stereochemistry. The remaining oxidoreductase notD' (or notH') likely catalyzes the oxidative pyran ring formation to yield (-)-stephacidin A. The FAD-dependent monooxygenase notI' is highly similar to notB' and is predicted to catalyze a similar conversion from (-)-stephacidin A to (+)-notoamide B via the 2,3-epoxidation of (-)-stephacidin A followed by a pinacol-type rearrangement. Finally, it remains unclear which enzyme could be responsible for the final hydroxylation steps leading to notoamide A and sclerotiamide. The function of notP' in the notoamide biosynthesis has not been determined yet. This Aspergillus versicolor protein is Short chain dehydrogenases/reductase notP'.